The primary structure comprises 293 residues: EID1-like F-box protein 1 (293 aa).

One can recognise an F-box domain in the interval 16–68; it reads QCTKGHLNEDVLLLVFQHLNWNPKLVATLSCVCRWFDDFAKRVLWKEFCKTRA. Residues 245-293 form a disordered region; the sequence is AIPSEDNNHTEKKQDNGFPRENVLKRRNSLLGGSENGPPPQKRLTNPNQ. A compositionally biased stretch (basic and acidic residues) spans 250–259; sequence DNNHTEKKQD.

The chain is EID1-like F-box protein 1 (EDL1) from Arabidopsis thaliana (Mouse-ear cress).